Reading from the N-terminus, the 52-residue chain is ATP synthase protein 8 (52 aa).

The helical transmembrane segment at 7–27 (MKWFLIYFIYLLIFYLFIMLI) threads the bilayer.

It belongs to the ATPase protein 8 family. In terms of assembly, F-type ATPases have 2 components, CF(1) - the catalytic core - and CF(0) - the membrane proton channel.

It localises to the mitochondrion membrane. Mitochondrial membrane ATP synthase (F(1)F(0) ATP synthase or Complex V) produces ATP from ADP in the presence of a proton gradient across the membrane which is generated by electron transport complexes of the respiratory chain. F-type ATPases consist of two structural domains, F(1) - containing the extramembraneous catalytic core and F(0) - containing the membrane proton channel, linked together by a central stalk and a peripheral stalk. During catalysis, ATP synthesis in the catalytic domain of F(1) is coupled via a rotary mechanism of the central stalk subunits to proton translocation. Part of the complex F(0) domain. Minor subunit located with subunit a in the membrane. The protein is ATP synthase protein 8 (mt:ATPase8) of Apis mellifera ligustica (Common honeybee).